The primary structure comprises 105 residues: Large ribosomal subunit protein uL24 (105 aa).

This sequence belongs to the universal ribosomal protein uL24 family. Part of the 50S ribosomal subunit.

In terms of biological role, one of two assembly initiator proteins, it binds directly to the 5'-end of the 23S rRNA, where it nucleates assembly of the 50S subunit. Functionally, one of the proteins that surrounds the polypeptide exit tunnel on the outside of the subunit. The polypeptide is Large ribosomal subunit protein uL24 (Saccharophagus degradans (strain 2-40 / ATCC 43961 / DSM 17024)).